We begin with the raw amino-acid sequence, 274 residues long: 2-succinyl-6-hydroxy-2,4-cyclohexadiene-1-carboxylate synthase (274 aa).

The protein belongs to the AB hydrolase superfamily. MenH family. As to quaternary structure, monomer.

The catalysed reaction is 5-enolpyruvoyl-6-hydroxy-2-succinyl-cyclohex-3-ene-1-carboxylate = (1R,6R)-6-hydroxy-2-succinyl-cyclohexa-2,4-diene-1-carboxylate + pyruvate. It participates in quinol/quinone metabolism; 1,4-dihydroxy-2-naphthoate biosynthesis; 1,4-dihydroxy-2-naphthoate from chorismate: step 3/7. Its pathway is quinol/quinone metabolism; menaquinone biosynthesis. In terms of biological role, catalyzes a proton abstraction reaction that results in 2,5-elimination of pyruvate from 2-succinyl-5-enolpyruvyl-6-hydroxy-3-cyclohexene-1-carboxylate (SEPHCHC) and the formation of 2-succinyl-6-hydroxy-2,4-cyclohexadiene-1-carboxylate (SHCHC). The sequence is that of 2-succinyl-6-hydroxy-2,4-cyclohexadiene-1-carboxylate synthase from Yersinia enterocolitica serotype O:8 / biotype 1B (strain NCTC 13174 / 8081).